The chain runs to 104 residues: MAARSLSGAVKSLCSAASGSLSCSIVLRRSYVATSQNVTAAGLSKGGSTRVMVGKMEQRGLDQEAESAWGPDPVTGYYRPSNRAAEIDPAELRELLLKNKAKSF.

The transit peptide at 1 to 31 directs the protein to the mitochondrion; the sequence is MAARSLSGAVKSLCSAASGSLSCSIVLRRSY.

The protein belongs to the LEA type 3 family.

It is found in the mitochondrion. The protein is Late embryogenis abundant protein 41 of Arabidopsis thaliana (Mouse-ear cress).